A 289-amino-acid polypeptide reads, in one-letter code: Glycine--tRNA ligase alpha subunit (289 aa).

The protein belongs to the class-II aminoacyl-tRNA synthetase family. Tetramer of two alpha and two beta subunits.

Its subcellular location is the cytoplasm. The catalysed reaction is tRNA(Gly) + glycine + ATP = glycyl-tRNA(Gly) + AMP + diphosphate. The protein is Glycine--tRNA ligase alpha subunit of Rickettsia felis (strain ATCC VR-1525 / URRWXCal2) (Rickettsia azadi).